We begin with the raw amino-acid sequence, 302 residues long: Homoserine O-acetyltransferase (302 aa).

Residue Cys142 is the Acyl-thioester intermediate of the active site. Lys163 and Ser192 together coordinate substrate. Catalysis depends on His235, which acts as the Proton acceptor. Glu237 is a catalytic residue. Position 249 (Arg249) interacts with substrate.

Belongs to the MetA family.

Its subcellular location is the cytoplasm. It carries out the reaction L-homoserine + acetyl-CoA = O-acetyl-L-homoserine + CoA. The protein operates within amino-acid biosynthesis; L-methionine biosynthesis via de novo pathway; O-acetyl-L-homoserine from L-homoserine: step 1/1. Functionally, transfers an acetyl group from acetyl-CoA to L-homoserine, forming acetyl-L-homoserine. The polypeptide is Homoserine O-acetyltransferase (Geobacillus sp. (strain WCH70)).